Consider the following 190-residue polypeptide: dCTP deaminase, dUMP-forming (190 aa).

DCTP contacts are provided by residues 101–106 (KSSLGR), Asp-119, 127–129 (TLE), Gln-148, Tyr-162, and Gln-174. Glu-129 acts as the Proton donor/acceptor in catalysis. Residues 163 to 190 (GSSQVGSKYQGQRGPTPSKSYQNFVKSN) form a disordered region.

This sequence belongs to the dCTP deaminase family. As to quaternary structure, homotrimer.

It catalyses the reaction dCTP + 2 H2O = dUMP + NH4(+) + diphosphate. The protein operates within pyrimidine metabolism; dUMP biosynthesis; dUMP from dCTP: step 1/1. Functionally, bifunctional enzyme that catalyzes both the deamination of dCTP to dUTP and the hydrolysis of dUTP to dUMP without releasing the toxic dUTP intermediate. The protein is dCTP deaminase, dUMP-forming of Mycolicibacterium gilvum (strain PYR-GCK) (Mycobacterium gilvum (strain PYR-GCK)).